A 260-amino-acid chain; its full sequence is Proteasome assembly chaperone 2 (260 aa).

It belongs to the PSMG2 family. In terms of assembly, forms a heterodimer with psmg1. In terms of processing, degraded by the proteasome upon completion of 20S proteasome maturation.

The protein resides in the nucleus. In terms of biological role, chaperone protein which promotes assembly of the 20S proteasome as part of a heterodimer with psmg1. In Danio rerio (Zebrafish), this protein is Proteasome assembly chaperone 2.